The sequence spans 285 residues: Small ribosomal subunit protein uS2 (285 aa).

The disordered stretch occupies residues 228–285; it reads RAGLSADKDAKPEAGAGEPLAEWEQELLSQAAPAAEAEAAPAAEAEAAPAAEAPATEA. Over residues 258-285 the composition is skewed to low complexity; the sequence is AAPAAEAEAAPAAEAEAAPAAEAPATEA.

Belongs to the universal ribosomal protein uS2 family.

The sequence is that of Small ribosomal subunit protein uS2 from Rhodococcus erythropolis (strain PR4 / NBRC 100887).